Here is a 123-residue protein sequence, read N- to C-terminus: Cholecystokinin (123 aa).

The first 19 residues, 1–19 (MNAGICVCVLLAALSTSSC), serve as a signal peptide directing secretion. Residues 20–103 (LSLPAVSEDG…MGNNHRIKDR (84 aa)) constitute a propeptide that is removed on maturation. The disordered stretch occupies residues 43–67 (HTRAAPSSGQLSLLSKAEDDEEPRS). Y105 bears the Sulfotyrosine mark. F111 carries the post-translational modification Phenylalanine amide. A propeptide spanning residues 115–123 (SAEEYEYSS) is cleaved from the precursor. A sulfotyrosine mark is found at Y119 and Y121.

The protein belongs to the gastrin/cholecystokinin family. In terms of processing, the precursor is cleaved by proteases to produce a number of active cholecystokinins. As to expression, expressed in the ovary, kidney, gill, gastrointestinal tract and pituitary. Differentially expressed in the brain in the optic tectum-thalamus, hypothalamus, telencephalon, olfactory bulb and tract, preoptic region and posterior brain region. Expression is strongest in the hypothalamus, where localization is to the posterior ventrolateral region. Expression in the brain is transiently increased 2 hours after feeding. Abundant in the sensory layers of the vagal lobe and along the border of the sensory region of the lobe and the deep fiber laye. Also present in the facial lobe and throughout the glossopharyngeal lobe.

It localises to the secreted. In terms of biological role, this peptide hormone induces gall bladder contraction and the release of pancreatic enzymes in the gut. Induces the secretion of gonadotropin and growth hormone from the pituitary. Suppresses food intake and decreases the expression of preprosomatostatin genes in the forebrain. The polypeptide is Cholecystokinin (cck) (Carassius auratus (Goldfish)).